Here is a 379-residue protein sequence, read N- to C-terminus: Queuine tRNA-ribosyltransferase (379 aa).

Catalysis depends on aspartate 91, which acts as the Proton acceptor. Substrate-binding positions include 91–95 (DSGGF), aspartate 145, glutamine 189, and glycine 216. An RNA binding region spans residues 247 to 253 (GVGKPED). Aspartate 266 serves as the catalytic Nucleophile. Positions 271–275 (TRNAR) are RNA binding; important for wobble base 34 recognition. Zn(2+) is bound by residues cysteine 304, cysteine 306, cysteine 309, and histidine 335.

It belongs to the queuine tRNA-ribosyltransferase family. Homodimer. Within each dimer, one monomer is responsible for RNA recognition and catalysis, while the other monomer binds to the replacement base PreQ1. Requires Zn(2+) as cofactor.

The catalysed reaction is 7-aminomethyl-7-carbaguanine + guanosine(34) in tRNA = 7-aminomethyl-7-carbaguanosine(34) in tRNA + guanine. It functions in the pathway tRNA modification; tRNA-queuosine biosynthesis. Catalyzes the base-exchange of a guanine (G) residue with the queuine precursor 7-aminomethyl-7-deazaguanine (PreQ1) at position 34 (anticodon wobble position) in tRNAs with GU(N) anticodons (tRNA-Asp, -Asn, -His and -Tyr). Catalysis occurs through a double-displacement mechanism. The nucleophile active site attacks the C1' of nucleotide 34 to detach the guanine base from the RNA, forming a covalent enzyme-RNA intermediate. The proton acceptor active site deprotonates the incoming PreQ1, allowing a nucleophilic attack on the C1' of the ribose to form the product. After dissociation, two additional enzymatic reactions on the tRNA convert PreQ1 to queuine (Q), resulting in the hypermodified nucleoside queuosine (7-(((4,5-cis-dihydroxy-2-cyclopenten-1-yl)amino)methyl)-7-deazaguanosine). This chain is Queuine tRNA-ribosyltransferase, found in Vibrio cholerae serotype O1 (strain ATCC 39315 / El Tor Inaba N16961).